The following is a 488-amino-acid chain: Glutamate--tRNA ligase (488 aa).

Positions 9–19 (PSPTGFLHIGG) match the 'HIGH' region motif. 4 residues coordinate Zn(2+): C112, C114, C139, and H141. The 'KMSKS' region motif lies at 256–260 (KLSKR). K259 contacts ATP.

It belongs to the class-I aminoacyl-tRNA synthetase family. Glutamate--tRNA ligase type 1 subfamily. As to quaternary structure, monomer. Zn(2+) serves as cofactor.

The protein localises to the cytoplasm. It catalyses the reaction tRNA(Glu) + L-glutamate + ATP = L-glutamyl-tRNA(Glu) + AMP + diphosphate. Its function is as follows. Catalyzes the attachment of glutamate to tRNA(Glu) in a two-step reaction: glutamate is first activated by ATP to form Glu-AMP and then transferred to the acceptor end of tRNA(Glu). The sequence is that of Glutamate--tRNA ligase from Elusimicrobium minutum (strain Pei191).